Here is a 293-residue protein sequence, read N- to C-terminus: Elongation factor Ts (293 aa).

Residues 80–83 (TDFV) are involved in Mg(2+) ion dislocation from EF-Tu.

It belongs to the EF-Ts family.

The protein resides in the cytoplasm. Associates with the EF-Tu.GDP complex and induces the exchange of GDP to GTP. It remains bound to the aminoacyl-tRNA.EF-Tu.GTP complex up to the GTP hydrolysis stage on the ribosome. This Staphylococcus aureus (strain USA300) protein is Elongation factor Ts.